We begin with the raw amino-acid sequence, 480 residues long: MRGMPLNSMKLFRITDVMRRKVRHIHFVGIGGIGMSGIAEVLLNLGYTVSGSDLRTSDTTEHLSSLGATVFQGHKASNLTDVDVVVTSTAVRKDNPEVLEAHRRSVPVIPRAEMLAELLKMKVSIAVSGSHGKTTTTSMIATVMASGGLDPTMVIGGKLGSIGSNARMGHGEFIVAEADESDGSFLKLSPSLAVITNIDREHLDFYRGIEDIKDAFLQFANIVPFYGSAVLCLDDPHIKTILSDIKRKTITYGMEPAADYRAQELRFNGAVTEYELYYRTECLGSVTLSVPGMFNVYNSLATVAVARELDMTFPDIQQGLKSYVGVGRRLEVKGKIAGVTVVDDYGHHPTEISATLAAARQVWKNRMIVVFQPHRYTRTQALFREFLGAFTEADLLIVTDIYPASEDPIEGVTAEALCDGIRSLTRREVRYIPNFSDITDYLMTVVQPGDTVITQGAGSVNSVGVSLLSRLKEVEDSRAA.

129 to 135 (GSHGKTT) contributes to the ATP binding site.

This sequence belongs to the MurCDEF family.

It is found in the cytoplasm. The catalysed reaction is UDP-N-acetyl-alpha-D-muramate + L-alanine + ATP = UDP-N-acetyl-alpha-D-muramoyl-L-alanine + ADP + phosphate + H(+). It functions in the pathway cell wall biogenesis; peptidoglycan biosynthesis. Its function is as follows. Cell wall formation. The chain is UDP-N-acetylmuramate--L-alanine ligase from Syntrophus aciditrophicus (strain SB).